Reading from the N-terminus, the 329-residue chain is Diaminopimelate epimerase (329 aa).

Substrate is bound by residues N14 and N73. The active-site Proton donor is the C82. Substrate-binding positions include 83–84 (GN), N170, N206, and 224–225 (ER). The Proton acceptor role is filled by C233. 234–235 (GT) provides a ligand contact to substrate.

Belongs to the diaminopimelate epimerase family. Homodimer.

The protein resides in the cytoplasm. It catalyses the reaction (2S,6S)-2,6-diaminopimelate = meso-2,6-diaminopimelate. The protein operates within amino-acid biosynthesis; L-lysine biosynthesis via DAP pathway; DL-2,6-diaminopimelate from LL-2,6-diaminopimelate: step 1/1. In terms of biological role, catalyzes the stereoinversion of LL-2,6-diaminopimelate (L,L-DAP) to meso-diaminopimelate (meso-DAP), a precursor of L-lysine and an essential component of the bacterial peptidoglycan. The sequence is that of Diaminopimelate epimerase from Listeria monocytogenes serovar 1/2a (strain ATCC BAA-679 / EGD-e).